The following is a 156-amino-acid chain: Ribonuclease P protein component (156 aa).

The segment at 126-156 (GLRKLGVTPGGGRSPAPRAHSGARPRTDARS) is disordered.

Belongs to the RnpA family. In terms of assembly, consists of a catalytic RNA component (M1 or rnpB) and a protein subunit.

The enzyme catalyses Endonucleolytic cleavage of RNA, removing 5'-extranucleotides from tRNA precursor.. RNaseP catalyzes the removal of the 5'-leader sequence from pre-tRNA to produce the mature 5'-terminus. It can also cleave other RNA substrates such as 4.5S RNA. The protein component plays an auxiliary but essential role in vivo by binding to the 5'-leader sequence and broadening the substrate specificity of the ribozyme. The polypeptide is Ribonuclease P protein component (Nocardia farcinica (strain IFM 10152)).